A 1560-amino-acid polypeptide reads, in one-letter code: MEPGSDDFLPPPECPVFEPSWAEFRDPLGYIAKIRPIAEKSGICKIRPPADWQPPFAVEVDNFRFTPRIQRLNELEAQTRVKLNYLDQIAKFWEIQGSSLKIPNVERRILDLYSLSKIVVEEGGYEAICKDRRWARVAQRLNYPPGKNIGSLLRSHYERIVYPYEMYQSGANLVQCNTRPFDNEEKDKEYKPHSIPLRQSVQPSKFNSYGRRAKRLQPDPEPTEEDIEKNPELKKLQIYGAGPKMMGLGLMAKDKTLRKKDKEGPECPPTVVVKEELGGDVKVESTSPKTFLESKEELSHSPEPCTKMTMRLRRNHSNAQFIESYVCRMCSRGDEDDKLLLCDGCDDNYHIFCLLPPLPEIPKGVWRCPKCVMAECKRPPEAFGFEQATREYTLQSFGEMADSFKADYFNMPVHMVPTELVEKEFWRLVNSIEEDVTVEYGADIHSKEFGSGFPVSDSKRHLTPEEEEYATSGWNLNVMPVLEQSVLCHINADISGMKVPWLYVGMVFSAFCWHIEDHWSYSINYLHWGEPKTWYGVPSLAAEHLEEVMKKLTPELFDSQPDLLHQLVTLMNPNTLMSHGVPVVRTNQCAGEFVITFPRAYHSGFNQGYNFAEAVNFCTADWLPAGRQCIEHYRRLRRYCVFSHEELICKMAACPEKLDLNLAAAVHKEMFIMVQEERRLRKALLEKGITEAEREAFELLPDDERQCIKCKTTCFLSALACYDCPDGLVCLSHINDLCKCSSSRQYLRYRYTLDELPAMLHKLKVRAESFDTWANKVRVALEVEDGRKRSLEELRALESEARERRFPNSELLQQLKNCLSEAEACVSRALGLVSGQEAGPHRVAGLQMTLTELRAFLDQMNNLPCAMHQIGDVKGVLEQVEAYQAEAREALASLPSSPGLLQSLLERGRQLGVEVPEAQQLQRQVEQARWLDEVKRTLAPSARRGTLAVMRGLLVAGASVAPSPAVDKAQAELQELLTIAERWEEKAHLCLEARQKHPPATLEAIIREAENIPVHLPNIQALKEALAKARAWIADVDEIQNGDHYPCLDDLEGLVAVGRDLPVGLEELRQLELQVLTAHSWREKASKTFLKKNSCYTLLEVLCPCADAGSDSTKRSRWMEKELGLYKSDTELLGLSAQDLRDPGSVIVAFKEGEQKEKEGILQLRRTNSAKPSPLASSSTASSTTSICVCGQVLAGAGALQCDLCQDWFHGRCVSVPRLLSSPRPNPTSSPLLAWWEWDTKFLCPLCMRSRRPRLETILALLVALQRLPVRLPEGEALQCLTERAISWQGRARQALASEDVTALLGRLAELRQRLQAEPRPEEPPNYPAAPASDPLREGSGKDMPKVQGLLENGDSVTSPEKVAPEEGSGKRDLELLSSLLPQLTGPVLELPEATRAPLEELMMEGDLLEVTLDENHSIWQLLQAGQPPDLERIRTLLELEKAERHGSRARGRALERRRRRKVDRGGEGDDPAREELEPKRVRSSGPEAEEVQEEEELEEETGGEGPPAPIPTTGSPSTQENQNGLEPAEGTTSGPSAPFSTLTPRLHLPCPQQPPQQQL.

The JmjN domain maps to 14–55; sequence CPVFEPSWAEFRDPLGYIAKIRPIAEKSGICKIRPPADWQPP. An ARID domain is found at 79–169; the sequence is TRVKLNYLDQ…IVYPYEMYQS (91 aa). The span at 197 to 207 shows a compositional bias: polar residues; sequence LRQSVQPSKFN. The tract at residues 197-227 is disordered; that stretch reads LRQSVQPSKFNSYGRRAKRLQPDPEPTEEDI. Glycyl lysine isopeptide (Lys-Gly) (interchain with G-Cter in SUMO2) cross-links involve residues Lys-205, Lys-229, Lys-244, and Lys-274. Ser-287 carries the post-translational modification Phosphoserine. Residue Lys-295 forms a Glycyl lysine isopeptide (Lys-Gly) (interchain with G-Cter in SUMO2) linkage. A phosphoserine mark is found at Ser-301 and Ser-317. Residues 326–372 form a PHD-type 1 zinc finger; the sequence is VCRMCSRGDEDDKLLLCDGCDDNYHIFCLLPPLPEIPKGVWRCPKCV. Tyr-440 contributes to the 2-oxoglutarate binding site. Residues 468-634 form the JmjC domain; sequence EYATSGWNLN…AGRQCIEHYR (167 aa). Fe cation contacts are provided by His-514 and Glu-516. Ser-522, Asn-524, and Lys-532 together coordinate 2-oxoglutarate. His-602 contacts Fe cation. The C5HC2 zinc-finger motif lies at 707–759; the sequence is CIKCKTTCFLSALACYDCPDGLVCLSHINDLCKCSSSRQYLRYRYTLDELPAM. A phosphoserine mark is found at Ser-893 and Ser-897. Residue Lys-1127 forms a Glycyl lysine isopeptide (Lys-Gly) (interchain with G-Cter in SUMO2) linkage. Residues 1161-1181 are disordered; it reads ILQLRRTNSAKPSPLASSSTA. The segment covering 1169–1181 has biased composition (low complexity); sequence SAKPSPLASSSTA. Residues 1187 to 1248 form a PHD-type 2 zinc finger; it reads ICVCGQVLAG…DTKFLCPLCM (62 aa). 2 disordered regions span residues 1316–1371 and 1444–1560; these read QAEP…GSGK and ERHG…QQQL. A compositionally biased stretch (basic and acidic residues) spans 1335–1345; the sequence is PLREGSGKDMP. A Phosphoserine modification is found at Ser-1359. Residues 1448 to 1463 are compositionally biased toward basic residues; that stretch reads SRARGRALERRRRRKV. Basic and acidic residues predominate over residues 1464–1481; the sequence is DRGGEGDDPAREELEPKR. Residues 1488-1503 are compositionally biased toward acidic residues; it reads EAEEVQEEEELEEETG. The span at 1516-1544 shows a compositional bias: polar residues; the sequence is SPSTQENQNGLEPAEGTTSGPSAPFSTLT.

This sequence belongs to the JARID1 histone demethylase family. In terms of assembly, part of two distinct complexes, one containing E2F6, and the other containing REST. Interacts with ZMYND8. The cofactor is Fe(2+). Expressed in all tissues examined. Highest levels found in brain and skeletal muscle.

The protein localises to the nucleus. It catalyses the reaction N(6),N(6),N(6)-trimethyl-L-lysyl(4)-[histone H3] + 3 2-oxoglutarate + 3 O2 = L-lysyl(4)-[histone H3] + 3 formaldehyde + 3 succinate + 3 CO2. Its activity is regulated as follows. The inhibitor KDOAM-25 and others inhibit its demethylase activity, resulting to cell cycle arrest in myeloma cells. Its function is as follows. Histone demethylase that specifically demethylates 'Lys-4' of histone H3, thereby playing a central role in histone code. Does not demethylate histone H3 'Lys-9', H3 'Lys-27', H3 'Lys-36', H3 'Lys-79' or H4 'Lys-20'. Demethylates trimethylated and dimethylated but not monomethylated H3 'Lys-4'. Participates in transcriptional repression of neuronal genes by recruiting histone deacetylases and REST at neuron-restrictive silencer elements. Represses the CLOCK-BMAL1 heterodimer-mediated transcriptional activation of the core clock component PER2. In Homo sapiens (Human), this protein is Lysine-specific demethylase 5C.